The chain runs to 452 residues: Probable V-type proton ATPase subunit H (452 aa).

It belongs to the V-ATPase H subunit family. V-ATPase is a heteromultimeric enzyme composed of a peripheral catalytic V1 complex (components A to H) attached to an integral membrane V0 proton pore complex (components: a, c, c', c'' and d).

Functionally, subunit of the peripheral V1 complex of vacuolar ATPase. Subunit H activates the ATPase activity of the enzyme and couples ATPase activity to proton flow. Vacuolar ATPase is responsible for acidifying a variety of intracellular compartments in eukaryotic cells, thus providing most of the energy required for transport processes in the vacuolar system. This is Probable V-type proton ATPase subunit H from Oryza sativa subsp. japonica (Rice).